Consider the following 55-residue polypeptide: Small integral membrane protein 27 (55 aa).

A helical transmembrane segment spans residues 11-31; that stretch reads WIYSVLLLAIVLISWGCIIYA.

Its subcellular location is the membrane. This chain is Small integral membrane protein 27, found in Homo sapiens (Human).